A 216-amino-acid chain; its full sequence is UPF0502 protein Ent638_1581 (216 aa).

Belongs to the UPF0502 family.

This is UPF0502 protein Ent638_1581 from Enterobacter sp. (strain 638).